Reading from the N-terminus, the 156-residue chain is Endoribonuclease YbeY (156 aa).

Zn(2+)-binding residues include His122, His126, and His132.

It belongs to the endoribonuclease YbeY family. Zn(2+) is required as a cofactor.

The protein localises to the cytoplasm. Its function is as follows. Single strand-specific metallo-endoribonuclease involved in late-stage 70S ribosome quality control and in maturation of the 3' terminus of the 16S rRNA. The sequence is that of Endoribonuclease YbeY from Syntrophomonas wolfei subsp. wolfei (strain DSM 2245B / Goettingen).